Here is a 521-residue protein sequence, read N- to C-terminus: MIKQALISVSDKTGIVDFAKSLSDLGVKLLSTGGTAKLLADAGLPVTEVADYTGFPEMLDGRVKTLHPKVHGGILARRDLPEHMQALEQHDIPTIDLLVVNLYPFVATIAKDDCTLADAIENIDIGGPTMLRSAAKNHRDVTVVVDPADYAVVLDEMKANGNAIGYATNFRLATKVFAHTAQYDGAITNYLTSLTDELQHASRSAYPATLNMAFDKVQDLRYGENPHQSAAFYRDLAAPAGALANYRQLQGKELSYNNIADSDAAWECVKTFDVPACVIIKHANPCGVAVGNDSADAYAKAFQTDPTSAFGGIIAFNREVDEAAAQAVAKQFVEVLIAPSFSDAAKQVFAAKQNVRLLEIALGDGHNAFDLKRVGGGLLVQSLDSKNVQPSELRVVTKRQPSAKEMDDLLFAWRVAKYVKSNAIVFCGNGMTLGVGAGQMSRVDSARIASIKAQNAGLTLAGSAVASDAFFPFRDGLDVVVAAGATCVIQPGGSMRDDEVIAAADEHGIAMILTGVRHFRH.

The region spanning 1–145 is the MGS-like domain; that stretch reads MIKQALISVS…KNHRDVTVVV (145 aa).

This sequence belongs to the PurH family.

It carries out the reaction (6R)-10-formyltetrahydrofolate + 5-amino-1-(5-phospho-beta-D-ribosyl)imidazole-4-carboxamide = 5-formamido-1-(5-phospho-D-ribosyl)imidazole-4-carboxamide + (6S)-5,6,7,8-tetrahydrofolate. The catalysed reaction is IMP + H2O = 5-formamido-1-(5-phospho-D-ribosyl)imidazole-4-carboxamide. It participates in purine metabolism; IMP biosynthesis via de novo pathway; 5-formamido-1-(5-phospho-D-ribosyl)imidazole-4-carboxamide from 5-amino-1-(5-phospho-D-ribosyl)imidazole-4-carboxamide (10-formyl THF route): step 1/1. Its pathway is purine metabolism; IMP biosynthesis via de novo pathway; IMP from 5-formamido-1-(5-phospho-D-ribosyl)imidazole-4-carboxamide: step 1/1. The polypeptide is Bifunctional purine biosynthesis protein PurH (Burkholderia ambifaria (strain ATCC BAA-244 / DSM 16087 / CCUG 44356 / LMG 19182 / AMMD) (Burkholderia cepacia (strain AMMD))).